The following is a 399-amino-acid chain: S-adenosylmethionine synthase (399 aa).

His15 provides a ligand contact to ATP. Asp17 contributes to the Mg(2+) binding site. Residue Glu43 coordinates K(+). Residues Glu56 and Gln99 each coordinate L-methionine. The flexible loop stretch occupies residues Gln99 to His109. ATP-binding positions include Asp175–Lys177, Arg242–Phe243, Asp251, Arg257–Lys258, Ala274, and Lys278. An L-methionine-binding site is contributed by Asp251. Lys282 serves as a coordination point for L-methionine.

It belongs to the AdoMet synthase family. Homotetramer; dimer of dimers. Requires Mg(2+) as cofactor. The cofactor is K(+).

It localises to the cytoplasm. The enzyme catalyses L-methionine + ATP + H2O = S-adenosyl-L-methionine + phosphate + diphosphate. Its pathway is amino-acid biosynthesis; S-adenosyl-L-methionine biosynthesis; S-adenosyl-L-methionine from L-methionine: step 1/1. Functionally, catalyzes the formation of S-adenosylmethionine (AdoMet) from methionine and ATP. The overall synthetic reaction is composed of two sequential steps, AdoMet formation and the subsequent tripolyphosphate hydrolysis which occurs prior to release of AdoMet from the enzyme. The polypeptide is S-adenosylmethionine synthase (Lactobacillus acidophilus (strain ATCC 700396 / NCK56 / N2 / NCFM)).